We begin with the raw amino-acid sequence, 326 residues long: Peroxidase 3 (326 aa).

An N-terminal signal peptide occupies residues Met1–Ala24. 4 disulfide bridges follow: Cys35–Cys113, Cys68–Cys73, Cys119–Cys321, and Cys198–Cys231. Residue His66 is the Proton acceptor of the active site. 5 residues coordinate Ca(2+): Asp67, Val70, Gly72, Asp74, and Ser76. N-linked (GlcNAc...) asparagine glycans are attached at residues Asn80 and Asn138. Substrate is bound at residue Pro161. Asn166 is a glycosylation site (N-linked (GlcNAc...) asparagine). His191 contacts heme b. Thr192 is a binding site for Ca(2+). Asn207 and Asn237 each carry an N-linked (GlcNAc...) asparagine glycan. Ca(2+) is bound by residues Asp244, Ser247, and Asp252.

Belongs to the peroxidase family. Classical plant (class III) peroxidase subfamily. Requires heme b as cofactor. The cofactor is Ca(2+). In terms of tissue distribution, expressed in root cells.

Its subcellular location is the secreted. It carries out the reaction 2 a phenolic donor + H2O2 = 2 a phenolic radical donor + 2 H2O. Functionally, removal of H(2)O(2), oxidation of toxic reductants, biosynthesis and degradation of lignin, suberization, auxin catabolism, response to environmental stresses such as wounding, pathogen attack and oxidative stress. These functions might be dependent on each isozyme/isoform in each plant tissue. In Arabidopsis thaliana (Mouse-ear cress), this protein is Peroxidase 3 (PER3).